The following is a 216-amino-acid chain: Redox-sensing transcriptional repressor Rex (216 aa).

A DNA-binding region (H-T-H motif) is located at residues 20–59; it reads QYYRLFKSLVEENVTRTNSQLISEKIGVDAATIRRDFSLF. 94–99 serves as a coordination point for NAD(+); the sequence is GVGNLG.

Belongs to the transcriptional regulatory Rex family. Homodimer.

It is found in the cytoplasm. Modulates transcription in response to changes in cellular NADH/NAD(+) redox state. The sequence is that of Redox-sensing transcriptional repressor Rex from Lactococcus lactis subsp. cremoris (strain SK11).